A 465-amino-acid chain; its full sequence is Cerebellar degeneration-related protein 2-like (465 aa).

Coiled-coil stretches lie at residues 38–143 (LLER…EQLR) and 188–265 (LEQE…TYLL). Positions 282–314 (APEADDPQPGRGDDLGAQDGVSSPAASPGHVVR) are disordered. Residues Ser308, Ser318, and Ser344 each carry the phosphoserine modification. Residues 350 to 377 (MSILREVDEQYHALLEKYEELLSKCRQH) are a coiled coil. The interval 382 to 417 (RHAGVQTSRPISRDSSWRDLRGGEEGQGEVKAGEKS) is disordered. The segment covering 392 to 405 (ISRDSSWRDLRGGE) has biased composition (basic and acidic residues).

It belongs to the CDR2 family.

This is Cerebellar degeneration-related protein 2-like (CDR2L) from Homo sapiens (Human).